The following is a 170-amino-acid chain: Photosystem I assembly protein Ycf3 (170 aa).

TPR repeat units follow at residues 35-68 (AFTY…EIDP), 72-105 (SYIL…NPFL), and 120-153 (GEQA…TPGN).

This sequence belongs to the Ycf3 family.

Its subcellular location is the plastid. The protein localises to the chloroplast thylakoid membrane. Essential for the assembly of the photosystem I (PSI) complex. May act as a chaperone-like factor to guide the assembly of the PSI subunits. This Zea mays (Maize) protein is Photosystem I assembly protein Ycf3.